The following is a 131-amino-acid chain: ATP synthase epsilon chain, chloroplastic (131 aa).

The protein belongs to the ATPase epsilon chain family. F-type ATPases have 2 components, CF(1) - the catalytic core - and CF(0) - the membrane proton channel. CF(1) has five subunits: alpha(3), beta(3), gamma(1), delta(1), epsilon(1). CF(0) has three main subunits: a, b and c.

Its subcellular location is the plastid. The protein resides in the chloroplast thylakoid membrane. Functionally, produces ATP from ADP in the presence of a proton gradient across the membrane. The sequence is that of ATP synthase epsilon chain, chloroplastic from Guillardia theta (Cryptophyte).